We begin with the raw amino-acid sequence, 435 residues long: IAA-amino acid hydrolase ILR1-like 5 (435 aa).

Positions 1–25 (MSFCKLVSFVLILHLLNSCLISCSS) are cleaved as a signal peptide. Positions 134, 136, 170, 194, and 397 each coordinate Mn(2+). Residues 432-435 (KDEL) carry the Prevents secretion from ER motif.

Belongs to the peptidase M20 family.

It is found in the endoplasmic reticulum lumen. In terms of biological role, hydrolyzes certain amino acid conjugates of the plant growth regulator indole-3-acetic acid (IAA). The chain is IAA-amino acid hydrolase ILR1-like 5 from Arabidopsis thaliana (Mouse-ear cress).